Consider the following 132-residue polypeptide: Small ribosomal subunit protein uS8 (132 aa).

Belongs to the universal ribosomal protein uS8 family. Part of the 30S ribosomal subunit. Contacts proteins S5 and S12.

One of the primary rRNA binding proteins, it binds directly to 16S rRNA central domain where it helps coordinate assembly of the platform of the 30S subunit. This is Small ribosomal subunit protein uS8 from Corynebacterium efficiens (strain DSM 44549 / YS-314 / AJ 12310 / JCM 11189 / NBRC 100395).